Reading from the N-terminus, the 260-residue chain is 5'-nucleotidase SurE (260 aa).

Residues Asp-8, Asp-9, Ser-39, and Asn-93 each coordinate a divalent metal cation.

It belongs to the SurE nucleotidase family. A divalent metal cation serves as cofactor.

Its subcellular location is the cytoplasm. The catalysed reaction is a ribonucleoside 5'-phosphate + H2O = a ribonucleoside + phosphate. Its function is as follows. Nucleotidase that shows phosphatase activity on nucleoside 5'-monophosphates. The protein is 5'-nucleotidase SurE of Thermofilum pendens (strain DSM 2475 / Hrk 5).